Here is a 123-residue protein sequence, read N- to C-terminus: MRYRVTTKFYVWIFHYNVTKGISKRVILLYNLKRGTSSIFRCCLCEKLNFFPVWFLFLFFIASHINILFFFFLDVLWFLWCYLCSGLFLFDVFSHLPGTLCEVQFFRLWIDGLSPIRYFIPQH.

Transmembrane regions (helical) follow at residues 53–73 (VWFL…FFFL) and 75–95 (VLWF…VFSH).

The protein resides in the membrane. This is an uncharacterized protein from Saccharomyces cerevisiae (strain ATCC 204508 / S288c) (Baker's yeast).